Consider the following 526-residue polypeptide: Fumitremorgin C synthase (526 aa).

Residues 4 to 24 (LPLSPAVLFLTITLPILYFWI) form a helical membrane-spanning segment. Residue cysteine 443 participates in heme binding.

The protein belongs to the cytochrome P450 family. Heme is required as a cofactor.

The protein localises to the membrane. It carries out the reaction tryprostatin A + reduced [NADPH--hemoprotein reductase] + O2 = fumitremorgin C + oxidized [NADPH--hemoprotein reductase] + 2 H2O + H(+). It participates in mycotoxin biosynthesis. Cytochrome P450 monooxygenase; part of the gene cluster that mediates the biosynthesis of fumitremorgins, indole alkaloids that carry not only intriguing chemical structures, but also interesting biological and pharmacological activities. The biosynthesis of fumitremorgin-type alkaloids begins by condensation of the two amino acids L-tryptophan and L-proline to brevianamide F, catalyzed by the non-ribosomal peptide synthetase ftmPS/ftmA. Brevianamide F is then prenylated by the prenyltransferase ftmPT1/ftmB in the presence of dimethylallyl diphosphate, resulting in the formation of tryprostatin B. The three cytochrome P450 monooxygenases, ftmP450-1/ftmC, ftmP450-2/ftmE and ftmP450-3/FtmG, are responsible for the conversion of tryprostatin B to 6-hydroxytryprostatin B, tryprostatin A to fumitremorgin C and fumitremorgin C to 12,13-dihydroxyfumitremorgin C, respectively. The putative methyltransferase ftmMT/ftmD is expected for the conversion of 6-hydroxytryprostatin B to tryprostatin A. FtmPT2/FtmH catalyzes the prenylation of 12,13-dihydroxyfumitre-morgin C in the presence of dimethylallyl diphosphate, resulting in the formation of fumitremorgin B. Fumitremorgin B is further converted to verruculogen by ftmOx1/ftmF via the insertion of an endoperoxide bond between the two prenyl moieties. Finally, verruculogen is further converted to fumitremorgin A by the verruculogen prenyltransferase ftmPT3. This is Fumitremorgin C synthase from Neosartorya fischeri (strain ATCC 1020 / DSM 3700 / CBS 544.65 / FGSC A1164 / JCM 1740 / NRRL 181 / WB 181) (Aspergillus fischerianus).